The primary structure comprises 468 residues: GDNF family receptor alpha-1 (468 aa).

An N-terminal signal peptide occupies residues 1-24 (MFLATLYFVLPLLDLLMSAEVSGG). Tandem repeats lie at residues 25-113 (DRLD…LQGN), 150-238 (KGNN…YEER), and 239-342 (ERPN…KNAI). A disulfide bridge links cysteine 36 with cysteine 42. Residue asparagine 59 is glycosylated (N-linked (GlcNAc...) asparagine). Intrachain disulfides connect cysteine 154–cysteine 214, cysteine 161–cysteine 167, cysteine 178–cysteine 192, cysteine 187–cysteine 233, cysteine 216–cysteine 221, cysteine 243–cysteine 313, cysteine 250–cysteine 256, cysteine 267–cysteine 285, cysteine 277–cysteine 337, and cysteine 315–cysteine 325. Residues asparagine 347 and asparagine 406 are each glycosylated (N-linked (GlcNAc...) asparagine). Serine 430 carries the GPI-anchor amidated serine lipid modification. Positions 431–468 (HITTKSMAAPPSCGLSSLPVMVFTALAALLSVSLAETS) are cleaved as a propeptide — removed in mature form.

Belongs to the GDNFR family. Interacts with GDNF ligand and RET: forms a 2:2:2 ternary complex composed of GDNF ligand, GFRA1 and RET receptor. Interacts with SORL1, either alone or in complex with GDNF. Interaction between SORL1 and GFRA1 leads to GFRA1 internalization, but not degradation. As to expression, expressed in the brain, in hippocampal neurons (at protein level). Isoform 1 and isoform 2 are expressed in heart, brain, lung, liver, kidney and testis.

It is found in the cell membrane. Its subcellular location is the golgi apparatus. The protein localises to the trans-Golgi network. The protein resides in the endosome. It localises to the multivesicular body. Coreceptor for GDNF, a neurotrophic factor that enhances survival and morphological differentiation of dopaminergic neurons and increases their high-affinity dopamine uptake. GDNF-binding leads to autophosphorylation and activation of the RET receptor. The polypeptide is GDNF family receptor alpha-1 (Gfra1) (Mus musculus (Mouse)).